Here is a 78-residue protein sequence, read N- to C-terminus: Protein M6 (78 aa).

The protein belongs to the A9/FIL1 family. In terms of tissue distribution, tapetum of anthers.

The protein localises to the secreted. The sequence is that of Protein M6 (M6) from Lilium henryi (Henry's lily).